Reading from the N-terminus, the 374-residue chain is Anhydro-N-acetylmuramic acid kinase (374 aa).

12 to 19 (GTSLDGID) serves as a coordination point for ATP.

Belongs to the anhydro-N-acetylmuramic acid kinase family.

It catalyses the reaction 1,6-anhydro-N-acetyl-beta-muramate + ATP + H2O = N-acetyl-D-muramate 6-phosphate + ADP + H(+). It functions in the pathway amino-sugar metabolism; 1,6-anhydro-N-acetylmuramate degradation. Its pathway is cell wall biogenesis; peptidoglycan recycling. In terms of biological role, catalyzes the specific phosphorylation of 1,6-anhydro-N-acetylmuramic acid (anhMurNAc) with the simultaneous cleavage of the 1,6-anhydro ring, generating MurNAc-6-P. Is required for the utilization of anhMurNAc either imported from the medium or derived from its own cell wall murein, and thus plays a role in cell wall recycling. The protein is Anhydro-N-acetylmuramic acid kinase of Sodalis glossinidius (strain morsitans).